The primary structure comprises 500 residues: Glucose-1-phosphate adenylyltransferase small subunit 1, chloroplastic/amyloplastic (500 aa).

The transit peptide at 1 to 50 (MAMMAMGAASWAPIPAPARAAAAFYPGRDLAAARRRRGAAARRPFVFTPR) directs the protein to the chloroplast.

It belongs to the bacterial/plant glucose-1-phosphate adenylyltransferase family. As to quaternary structure, heterotetramer composed of two small and two large subunits. Expressed in leaves.

Its subcellular location is the plastid. It localises to the chloroplast. The protein resides in the amyloplast. It carries out the reaction alpha-D-glucose 1-phosphate + ATP + H(+) = ADP-alpha-D-glucose + diphosphate. The protein operates within glycan biosynthesis; starch biosynthesis. Its activity is regulated as follows. Activated by 3'phosphoglycerate, inhibited by orthophosphate. Allosteric regulation. Its function is as follows. Involved in synthesis of starch. Catalyzes the synthesis of ADP-glucose, a molecule that serves as an activated glycosyl donor for alpha-1,4-glucan synthesis. Essential for starch synthesis in leaf chloroplasts and endosperm amyloplasts. This is Glucose-1-phosphate adenylyltransferase small subunit 1, chloroplastic/amyloplastic from Oryza sativa subsp. japonica (Rice).